Here is a 154-residue protein sequence, read N- to C-terminus: Large ribosomal subunit protein uL15 (154 aa).

A disordered region spans residues 1–61 (MDLSTLKPVA…GGQMPLMRRM (61 aa)).

Belongs to the universal ribosomal protein uL15 family. As to quaternary structure, part of the 50S ribosomal subunit.

Binds to the 23S rRNA. The sequence is that of Large ribosomal subunit protein uL15 from Oenococcus oeni (strain ATCC BAA-331 / PSU-1).